A 440-amino-acid chain; its full sequence is Chromosomal replication initiator protein DnaA (440 aa).

A domain I, interacts with DnaA modulators region spans residues 1 to 74; sequence MNPSQILENL…VQSGNKAIIN (74 aa). A domain II region spans residues 74 to 99; sequence NIQAQSAKQSNKSTKIDIAHIKAQST. Positions 100 to 316 are domain III, AAA+ region; that stretch reads ILNPSFTFDS…GIIISLNAYA (217 aa). ATP contacts are provided by Gly-146, Gly-148, Lys-149, and Thr-150. Residues 317–440 are domain IV, binds dsDNA; it reads TILGQEITLE…KNKILVKSQS (124 aa).

Belongs to the DnaA family. In terms of assembly, oligomerizes as a right-handed, spiral filament on DNA at oriC.

It localises to the cytoplasm. Its function is as follows. Plays an essential role in the initiation and regulation of chromosomal replication. ATP-DnaA binds to the origin of replication (oriC) to initiate formation of the DNA replication initiation complex once per cell cycle. Binds the DnaA box (a 9 base pair repeat at the origin) and separates the double-stranded (ds)DNA. Forms a right-handed helical filament on oriC DNA; dsDNA binds to the exterior of the filament while single-stranded (ss)DNA is stabiized in the filament's interior. The ATP-DnaA-oriC complex binds and stabilizes one strand of the AT-rich DNA unwinding element (DUE), permitting loading of DNA polymerase. After initiation quickly degrades to an ADP-DnaA complex that is not apt for DNA replication. Binds acidic phospholipids. The protein is Chromosomal replication initiator protein DnaA of Campylobacter jejuni (strain RM1221).